Consider the following 146-residue polypeptide: Putative pre-16S rRNA nuclease (146 aa).

The protein belongs to the YqgF nuclease family.

It is found in the cytoplasm. Its function is as follows. Could be a nuclease involved in processing of the 5'-end of pre-16S rRNA. In Pediococcus pentosaceus (strain ATCC 25745 / CCUG 21536 / LMG 10740 / 183-1w), this protein is Putative pre-16S rRNA nuclease.